A 235-amino-acid polypeptide reads, in one-letter code: Sugar fermentation stimulation protein homolog (235 aa).

It belongs to the SfsA family.

This is Sugar fermentation stimulation protein homolog from Allorhizobium ampelinum (strain ATCC BAA-846 / DSM 112012 / S4) (Agrobacterium vitis (strain S4)).